The primary structure comprises 677 residues: Methionine--tRNA ligase (677 aa).

Residues 15 to 25 carry the 'HIGH' region motif; it reads PYANGSIHLGH. The Zn(2+) site is built by cysteine 146, cysteine 149, cysteine 159, and cysteine 162. The 'KMSKS' region motif lies at 333–337; sequence KMSKS. ATP is bound at residue lysine 336. The tRNA-binding domain maps to 575 to 677; sequence DFAKVDLRVA…EGAKPGQQVK (103 aa).

This sequence belongs to the class-I aminoacyl-tRNA synthetase family. MetG type 1 subfamily. As to quaternary structure, homodimer. Requires Zn(2+) as cofactor.

Its subcellular location is the cytoplasm. It catalyses the reaction tRNA(Met) + L-methionine + ATP = L-methionyl-tRNA(Met) + AMP + diphosphate. Functionally, is required not only for elongation of protein synthesis but also for the initiation of all mRNA translation through initiator tRNA(fMet) aminoacylation. The sequence is that of Methionine--tRNA ligase from Enterobacter sp. (strain 638).